The sequence spans 178 residues: Protein modigliani (178 aa).

In terms of assembly, probably homodimerizes. Component of the MTV complex, composed of moi/modigliani, tea and ver/verrocchio. Interacts with ver/verrochio and tea (via C-terminus); the interactions are direct and require fully intact moi/modigliani and ver/verrocchio. The MTV complex is recruited to telomeres by the HipHop-HOAP complex, consisting of HipHop, cav/HOAP and Su(var)205/HP1 to form the terminin telomere-capping complex. Interacts with cav/HOAP and Su(var)205/HP1; the interactions are direct. Probably interacts with peo (via N-terminus and UBC domain).

The protein localises to the nucleus. Its subcellular location is the chromosome. It localises to the telomere. Part of the MTV complex that associates with the HipHop-HOAP complex to form the terminin telomere-capping complex involved in telomere maintenance and prevention of telomere fusion. Potentially functions downstream of mei-41/ATR. As part of the MTV complex binds single stranded DNA in a sequence-independent manner, protecting it from degradation. This Drosophila melanogaster (Fruit fly) protein is Protein modigliani.